Reading from the N-terminus, the 558-residue chain is Acid-sensing ion channel 4-B (558 aa).

The Cytoplasmic segment spans residues 1 to 71 (MPIEFVCKIK…TSERLGFRQT (71 aa)). The chain crosses the membrane as a helical span at residues 72–92 (LWGLALLVSLGLFLYQATWSA). Residues 93–433 (ATYLERPHLA…ETIEQKKAYD (341 aa)) are Extracellular-facing. 2 cysteine pairs are disulfide-bonded: Cys120/Cys204 and Cys182/Cys189. N-linked (GlcNAc...) asparagine glycosylation is found at Asn140, Asn183, Asn188, Asn210, and Asn245. Disulfide bonds link Cys298–Cys373, Cys317–Cys369, Cys321–Cys367, Cys330–Cys351, and Cys332–Cys344. A glycan (N-linked (GlcNAc...) asparagine) is linked at Asn374. Residues 434 to 454 (IAGLLGDIGGQMGLFIGASIL) form a helical membrane-spanning segment. The GAS motif; ion selectivity filter motif lies at 450–452 (GAS). Over 455-558 (TILEILDYIY…QQAVQQDFAC (104 aa)) the chain is Cytoplasmic.

Belongs to the amiloride-sensitive sodium channel (TC 1.A.6) family. ASIC4 subfamily. As to quaternary structure, homotrimer. Heterotrimer; with other ASIC proteins producing functional channels. In terms of tissue distribution, expressed in central nervous system.

It localises to the cell membrane. The catalysed reaction is Na(+)(in) = Na(+)(out). In terms of biological role, does not exhibit measurable stand-alone pH-gated sodium channel activity but may form pH-gated heterotrimeric sodium channels. In Danio rerio (Zebrafish), this protein is Acid-sensing ion channel 4-B.